Consider the following 497-residue polypeptide: MSNYVLALDQGTTSSRAILFTREGDIKQISQKEFTQIYPQPGWVEHNANEIFDTQSWVMRECLQEAGIGAADVVAAGITNQRETTVVWDKATGAPVYNAIVWQDRRTAGFCDELKARGLADVFRKKTGLVLDAYFSGTKVRWILDNVPGARAKAEKGELLFGTIDTWLIWNLTKGKAHVTDSSNASRTLMFNINTGAWDDELLGILDVPRSMLPRVTGSSEVVGDIHPEFLGKAIPIAGNAGDQQAATYGNACLKPGMAKNTYGTGCFMLMNTGTEVRSSQNNLLSTVAWTTPSGRFYALEGSVFIAGAVVQWLRDGLGIIKAAPEVEQLALSVPDNGGVYLVPAFAGLGAPHWDQYARGTMVGITRGATKAHIARAALESIALQTLDIMDCMQKDSGIKLAALRADGGATRNNLLMQFQADVLGVPVERPKVTETTALGAAYLAGLATGFWKSEDEIATMWQLDRRFEPNMSDDKRQHLVYEWQRAVERAKAWVEA.

Threonine 12 serves as a coordination point for ADP. Residues threonine 12, threonine 13, and serine 14 each coordinate ATP. Threonine 12 lines the sn-glycerol 3-phosphate pocket. Arginine 16 contributes to the ADP binding site. The sn-glycerol 3-phosphate site is built by arginine 82, glutamate 83, tyrosine 134, and aspartate 243. Arginine 82, glutamate 83, tyrosine 134, aspartate 243, and glutamine 244 together coordinate glycerol. 2 residues coordinate ADP: threonine 265 and glycine 308. Positions 265, 308, 312, and 409 each coordinate ATP. Residues glycine 409 and asparagine 413 each coordinate ADP.

Belongs to the FGGY kinase family.

The enzyme catalyses glycerol + ATP = sn-glycerol 3-phosphate + ADP + H(+). Its pathway is polyol metabolism; glycerol degradation via glycerol kinase pathway; sn-glycerol 3-phosphate from glycerol: step 1/1. Its activity is regulated as follows. Inhibited by fructose 1,6-bisphosphate (FBP). Functionally, key enzyme in the regulation of glycerol uptake and metabolism. Catalyzes the phosphorylation of glycerol to yield sn-glycerol 3-phosphate. The sequence is that of Glycerol kinase from Nitratidesulfovibrio vulgaris (strain ATCC 29579 / DSM 644 / CCUG 34227 / NCIMB 8303 / VKM B-1760 / Hildenborough) (Desulfovibrio vulgaris).